A 2075-amino-acid polypeptide reads, in one-letter code: Autophagy-related protein 2 homolog B (2075 aa).

Positions 13–107 constitute a Chorein N-terminal domain; sequence ACRYLLQRYL…LEMVFRPRPR (95 aa). S255, S379, S496, S839, S885, S898, and S1007 each carry phosphoserine. Y1011 carries the post-translational modification Phosphotyrosine. Phosphoserine is present on residues S1015 and S1017. T1021 is modified (phosphothreonine). Residues 1373–1403 are disordered; that stretch reads KAEMKPGVPQRKPKVDSSARSSSHGPVLPEA. A Phosphoserine modification is found at S1525. Disordered regions lie at residues 1570–1593, 1759–1792, and 2055–2075; these read TSPA…GRHT, EPNL…EDVS, and RNQI…HGED. Residues 1578–1587 show a composition bias toward polar residues; that stretch reads PHSSPSQTPT. The segment covering 2058-2075 has biased composition (basic and acidic residues); it reads IRPDVRQDESQKWRHGED.

This sequence belongs to the ATG2 family. Interacts with WDR45/WIPI4.

It is found in the preautophagosomal structure membrane. Its subcellular location is the lipid droplet. The protein localises to the endoplasmic reticulum membrane. The enzyme catalyses a 1,2-diacyl-sn-glycero-3-phospho-L-serine(in) = a 1,2-diacyl-sn-glycero-3-phospho-L-serine(out). It catalyses the reaction a 1,2-diacyl-sn-glycero-3-phosphoethanolamine(in) = a 1,2-diacyl-sn-glycero-3-phosphoethanolamine(out). Lipid transfer protein required for both autophagosome formation and regulation of lipid droplet morphology and dispersion. Tethers the edge of the isolation membrane (IM) to the endoplasmic reticulum (ER) and mediates direct lipid transfer from ER to IM for IM expansion. Binds to the ER exit site (ERES), which is the membrane source for autophagosome formation, and extracts phospholipids from the membrane source and transfers them to ATG9 (ATG9A or ATG9B) to the IM for membrane expansion. Lipid transfer activity is enhanced by WDR45/WIPI4, which promotes ATG2B-association with phosphatidylinositol 3-monophosphate (PI3P)-containing membranes. The protein is Autophagy-related protein 2 homolog B of Mus musculus (Mouse).